The chain runs to 405 residues: L-carnitine CoA-transferase (405 aa).

The CoA site is built by lysine 97 and arginine 104. Residue aspartate 169 is the Nucleophile of the active site.

The protein belongs to the CoA-transferase III family. CaiB subfamily. As to quaternary structure, homodimer.

It localises to the cytoplasm. It carries out the reaction crotonobetainyl-CoA + (R)-carnitine = crotonobetaine + (R)-carnitinyl-CoA. The enzyme catalyses 4-(trimethylamino)butanoyl-CoA + (R)-carnitine = (R)-carnitinyl-CoA + 4-(trimethylamino)butanoate. It functions in the pathway amine and polyamine metabolism; carnitine metabolism. In terms of biological role, catalyzes the reversible transfer of the CoA moiety from gamma-butyrobetainyl-CoA to L-carnitine to generate L-carnitinyl-CoA and gamma-butyrobetaine. Is also able to catalyze the reversible transfer of the CoA moiety from gamma-butyrobetainyl-CoA or L-carnitinyl-CoA to crotonobetaine to generate crotonobetainyl-CoA. In Shigella flexneri serotype 5b (strain 8401), this protein is L-carnitine CoA-transferase.